The following is a 125-amino-acid chain: RutC family protein aq_364 (125 aa).

It belongs to the RutC family.

This is RutC family protein aq_364 from Aquifex aeolicus (strain VF5).